A 261-amino-acid polypeptide reads, in one-letter code: Methyl jasmonate esterase 1 (261 aa).

The region spanning 8–251 is the AB hydrolase-1 domain; that stretch reads FVLVHGACHG…MFSKPLDLCA (244 aa). The Acyl-ester intermediate role is filled by S82. Active-site charge relay system residues include D211 and H239.

The protein belongs to the AB hydrolase superfamily. Methylesterase family. Homodimer.

It carries out the reaction methyl (-)-jasmonate + H2O = jasmonate + methanol + H(+). The enzyme catalyses methyl salicylate + H2O = salicylate + methanol + H(+). It functions in the pathway plant hormone biosynthesis. The protein operates within lipid metabolism; oxylipin biosynthesis. Functionally, methylesterase that catalyzes the hydrolysis of methyl jasmonate (MeJA) into jasmonate (JA). Can also use methyl salicylate (MeSA) as substrate with a lower efficiency. The sequence is that of Methyl jasmonate esterase 1 from Vitis vinifera (Grape).